The sequence spans 839 residues: DNA-directed RNA polymerase YonO (839 aa).

Mg(2+) contacts are provided by Asp-535, Asp-537, and Asp-539.

It belongs to the YRH RNA polymerase family. A divalent metal cation serves as cofactor.

The catalysed reaction is RNA(n) + a ribonucleoside 5'-triphosphate = RNA(n+1) + diphosphate. Functionally, a single subunit DNA-dependent RNA polymerase (RNAP) that catalyzes the transcription of DNA into RNA using the four ribonucleoside triphosphates (rNTPs) as substrates. The enzyme is more highly processive than the multisubunit RNAP from E.coli but is considerably more error-prone. It has no detectable proof-reading function but can perform pyrophosphorolysis. Probably transcribes the late genes of the SPbeta phage starting from yonK. This is DNA-directed RNA polymerase YonO (yonO) from Bacillus pumilus (Bacillus mesentericus).